The following is a 594-amino-acid chain: Apolipoprotein N-acyltransferase (594 aa).

Acidic residues predominate over residues 1–29; that stretch reads MIPAVTDDDPLEDPLDDDVAPGLDDAEPE. Residues 1–48 are disordered; sequence MIPAVTDDDPLEDPLDDDVAPGLDDAEPEPEPRDEHDEPSRPATGSRI. Topologically, residues 1–67 are cytoplasmic; it reads MIPAVTDDDP…RFGKGVLDRC (67 aa). Residues 30–40 show a composition bias toward basic and acidic residues; sequence PEPRDEHDEPS. Residues 68–87 form a helical membrane-spanning segment; the sequence is APLSAAIGGGLALWLSFPPI. The Extracellular portion of the chain corresponds to 88–116; it reads GWWFTAFPGLALLGWVLTRTATTKAGGFG. A helical membrane pass occupies residues 117–134; sequence YGVLFGLAFYVPLLPWIS. Over 135–138 the chain is Cytoplasmic; that stretch reads GLVG. The chain crosses the membrane as a helical span at residues 139–160; it reads AVPWLALAFAESLFCGLFGLGA. The Extracellular segment spans residues 161–221; that stretch reads VVVVRLPGWP…IGGAPLVSFA (61 aa). Residues 222-239 form a helical membrane-spanning segment; it reads VALIGFSLTLLTAQIVWW. Over 240–251 the chain is Cytoplasmic; that stretch reads WRHGHKPGVPAP. The chain crosses the membrane as a helical span at residues 252-269; sequence AVMLPGVAIAASLLVTAL. At 270–554 the chain is on the extracellular side; it reads VWPQVRQSGT…TDLTPATKWG (285 aa). A CN hydrolase domain is found at 287–543; the sequence is VTVAAVQGNV…PAYLDNQIRL (257 aa). Glu340 acts as the Proton acceptor in catalysis. The active site involves Lys405. Cys455 (nucleophile) is an active-site residue. The chain crosses the membrane as a helical span at residues 555–572; sequence PIVQAVLVIAGVAVLLIA. Over 573–594 the chain is Cytoplasmic; sequence ILHNGRFAPRMLRRRSATTVKR.

This sequence belongs to the CN hydrolase family. Apolipoprotein N-acyltransferase subfamily. In terms of assembly, interacts with Ppm1 (AC A0QZ12) upon coexpression in E.coli, which increases the PPM synthase activity of Ppm1.

Its subcellular location is the cell membrane. The catalysed reaction is N-terminal S-1,2-diacyl-sn-glyceryl-L-cysteinyl-[lipoprotein] + a glycerophospholipid = N-acyl-S-1,2-diacyl-sn-glyceryl-L-cysteinyl-[lipoprotein] + a 2-acyl-sn-glycero-3-phospholipid + H(+). It participates in protein modification; lipoprotein biosynthesis (N-acyl transfer). In terms of biological role, catalyzes the phospholipid dependent N-acylation of the N-terminal cysteine of apolipoprotein, the last step in lipoprotein maturation. Can transfer a number of fatty acids (C16 and C19, palmitic and probably tuberculostearic acids respectively are shown). Enhances the polyprenol monophosphomannose (PPM) synthase activity of Ppm1 (AC A0QZ12) without itself having PPM synthase catalytic activity. This chain is Apolipoprotein N-acyltransferase, found in Mycolicibacterium smegmatis (strain ATCC 700084 / mc(2)155) (Mycobacterium smegmatis).